Consider the following 152-residue polypeptide: uncharacterized protein (152 aa).

Residues 7 to 27 (TLSVIVFLISLIIIFGIYFSS) form a helical membrane-spanning segment.

The protein resides in the membrane. This is an uncharacterized protein from Methanocaldococcus jannaschii (strain ATCC 43067 / DSM 2661 / JAL-1 / JCM 10045 / NBRC 100440) (Methanococcus jannaschii).